A 445-amino-acid polypeptide reads, in one-letter code: tRNA modification GTPase MnmE (445 aa).

The (6S)-5-formyl-5,6,7,8-tetrahydrofolate site is built by R20, E79, and K119. Residues 215–371 enclose the TrmE-type G domain; sequence GLKLAIIGPP…ILKNIENIAE (157 aa). N225 contributes to the K(+) binding site. GTP contacts are provided by residues 225 to 230, 244 to 250, and 269 to 272; these read NVGKSS, SNIAGTT, and DTAG. S229 is a binding site for Mg(2+). 3 residues coordinate K(+): S244, I246, and T249. T250 contacts Mg(2+). K445 is a binding site for (6S)-5-formyl-5,6,7,8-tetrahydrofolate.

The protein belongs to the TRAFAC class TrmE-Era-EngA-EngB-Septin-like GTPase superfamily. TrmE GTPase family. Homodimer. Heterotetramer of two MnmE and two MnmG subunits. Requires K(+) as cofactor.

The protein localises to the cytoplasm. Its function is as follows. Exhibits a very high intrinsic GTPase hydrolysis rate. Involved in the addition of a carboxymethylaminomethyl (cmnm) group at the wobble position (U34) of certain tRNAs, forming tRNA-cmnm(5)s(2)U34. This is tRNA modification GTPase MnmE from Rickettsia rickettsii (strain Iowa).